A 337-amino-acid polypeptide reads, in one-letter code: 2-oxoglutarate-dependent dioxygenase 19 (337 aa).

The disordered stretch occupies residues 1–25 (MVAPSRLPSHEEQSAAAAADGSATP). The region spanning 179-283 (NLESCFQILV…RMSFVSLIGP (105 aa)) is the Fe2OG dioxygenase domain. Positions 208, 210, and 264 each coordinate Fe cation. Residue R274 participates in 2-oxoglutarate binding.

Belongs to the iron/ascorbate-dependent oxidoreductase family. The cofactor is Fe(2+). Requires L-ascorbate as cofactor. Expressed in shoots.

It is found in the cytoplasm. The enzyme catalyses melatonin + 2-oxoglutarate + O2 = 2-hydroxymelatonin + succinate + CO2. Its function is as follows. Involved in melatonin degradation. Catalyzes the hydroxylation of melatonin to produce 2-hydroxymelatonin. This is 2-oxoglutarate-dependent dioxygenase 19 from Oryza sativa subsp. japonica (Rice).